We begin with the raw amino-acid sequence, 213 residues long: Probable nicotinate-nucleotide adenylyltransferase (213 aa).

The protein belongs to the NadD family.

It carries out the reaction nicotinate beta-D-ribonucleotide + ATP + H(+) = deamido-NAD(+) + diphosphate. It functions in the pathway cofactor biosynthesis; NAD(+) biosynthesis; deamido-NAD(+) from nicotinate D-ribonucleotide: step 1/1. In terms of biological role, catalyzes the reversible adenylation of nicotinate mononucleotide (NaMN) to nicotinic acid adenine dinucleotide (NaAD). The protein is Probable nicotinate-nucleotide adenylyltransferase of Citrobacter koseri (strain ATCC BAA-895 / CDC 4225-83 / SGSC4696).